The following is a 277-amino-acid chain: NADPH-dependent 7-cyano-7-deazaguanine reductase (277 aa).

Substrate is bound at residue Val83 to Ser85. Residue Ser85–Lys86 participates in NADPH binding. Cys184 functions as the Thioimide intermediate in the catalytic mechanism. Asp191 functions as the Proton donor in the catalytic mechanism. His223 to Glu224 is a substrate binding site. Position 252 to 253 (Arg252 to Gly253) interacts with NADPH.

This sequence belongs to the GTP cyclohydrolase I family. QueF type 2 subfamily. As to quaternary structure, homodimer.

The protein resides in the cytoplasm. The catalysed reaction is 7-aminomethyl-7-carbaguanine + 2 NADP(+) = 7-cyano-7-deazaguanine + 2 NADPH + 3 H(+). Its pathway is tRNA modification; tRNA-queuosine biosynthesis. Its function is as follows. Catalyzes the NADPH-dependent reduction of 7-cyano-7-deazaguanine (preQ0) to 7-aminomethyl-7-deazaguanine (preQ1). This chain is NADPH-dependent 7-cyano-7-deazaguanine reductase, found in Cupriavidus taiwanensis (strain DSM 17343 / BCRC 17206 / CCUG 44338 / CIP 107171 / LMG 19424 / R1) (Ralstonia taiwanensis (strain LMG 19424)).